The following is a 157-amino-acid chain: Epithelial membrane protein 1 (157 aa).

A helical transmembrane segment spans residues 1-21 (MLVLLAGIFVVHIATVIMLFV). N43 and N46 each carry an N-linked (GlcNAc...) asparagine glycan. 3 helical membrane-spanning segments follow: residues 67–87 (FMIL…FQLF), 95–115 (FFLS…GVSI), and 134–154 (YILG…YLVL).

It belongs to the PMP-22/EMP/MP20 family.

The protein resides in the membrane. The protein is Epithelial membrane protein 1 (EMP1) of Homo sapiens (Human).